The sequence spans 146 residues: Angiogenin (146 aa).

The first 24 residues, 1–24, serve as a signal peptide directing secretion; sequence MVMGLHLLLLVFILGLGLTPPTLA. The residue at position 25 (glutamine 25) is a Pyrrolidone carboxylic acid. The Proton acceptor role is filled by histidine 37. Cystine bridges form between cysteine 50/cysteine 105, cysteine 63/cysteine 116, and cysteine 81/cysteine 131. Positions 55–59 match the Nucleolar localization signal motif; it reads RLRNM. TRNA is bound at residue cysteine 105. Histidine 138 (proton donor) is an active-site residue.

The protein belongs to the pancreatic ribonuclease family. In terms of assembly, homodimer. Interacts with RNH1; inhibiting ANG ribonuclease activity. Interacts with PCNA.

The protein localises to the secreted. It is found in the nucleus. Its subcellular location is the nucleolus. The protein resides in the cytoplasm. It localises to the stress granule. Its activity is regulated as follows. Has weak tRNA ribonuclease activity by itself due to partial autoinhibition by its C-terminus, which folds into a short alpha-helix that partially occludes the substrate-binding site. In absence of stress, the ribonuclease activity is inhibited by RNH1 in the cytoplasm. In response to stress, dissociates from RNH1 in the cytoplasm and associates with cytoplasmic ribosomes with vacant A-sites: ribosomes directly activate the tRNA ribonuclease activity of ANG by refolding the C-terminal alpha-helix. In response to stress, the angiogenic activity of ANG is inhibited by RNH1 in the nucleus. Its function is as follows. Secreted ribonuclease that can either promote or restrict cell proliferation of target cells, depending on the context. Endocytosed in target cells via its receptor PLXNB2 and translocates to the cytoplasm or nucleus. Under stress conditions, localizes to the cytoplasm and promotes the assembly of stress granules (SGs): specifically cleaves a subset of tRNAs within anticodon loops to produce tRNA-derived stress-induced fragments (tiRNAs), resulting in translation repression and inhibition of cell proliferation. tiRNas also prevent formation of apoptosome, thereby promoting cell survival. Preferentially cleaves RNAs between a pyrimidine and an adenosine residue, suggesting that it cleaves the anticodon loop of tRNA(Ala) (32-UUAGCAU-38) after positions 33 and 36. Cleaves a subset of tRNAs, including tRNA(Ala), tRNA(Glu), tRNA(Gly), tRNA(Lys), tRNA(Val), tRNA(His), tRNA(Asp) and tRNA(Sec). Under growth conditions and in differentiated cells, translocates to the nucleus and stimulates ribosomal RNA (rRNA) transcription, including that containing the initiation site sequences of 45S rRNA, thereby promoting cell growth and proliferation. Angiogenin induces vascularization of normal and malignant tissues via its ability to promote rRNA transcription. Involved in hematopoietic stem and progenitor cell (HSPC) growth and survival by promoting rRNA transcription in growth conditions and inhibiting translation in response to stress, respectively. Mediates the crosstalk between myeloid and intestinal epithelial cells to protect the intestinal epithelial barrier integrity: secreted by myeloid cells and promotes intestinal epithelial cells proliferation and survival. Also mediates osteoclast-endothelial cell crosstalk in growing bone: produced by osteoclasts and protects the neighboring vascular cells against senescence by promoting rRNA transcription. The sequence is that of Angiogenin (ANG) from Aotus trivirgatus (Three-striped night monkey).